We begin with the raw amino-acid sequence, 195 residues long: Endoribonuclease YbeY (195 aa).

Positions 153, 157, and 163 each coordinate Zn(2+).

The protein belongs to the endoribonuclease YbeY family. Zn(2+) is required as a cofactor.

It localises to the cytoplasm. Functionally, single strand-specific metallo-endoribonuclease involved in late-stage 70S ribosome quality control and in maturation of the 3' terminus of the 16S rRNA. The protein is Endoribonuclease YbeY of Prochlorococcus marinus (strain SARG / CCMP1375 / SS120).